We begin with the raw amino-acid sequence, 202 residues long: Imidazoleglycerol-phosphate dehydratase (202 aa).

Belongs to the imidazoleglycerol-phosphate dehydratase family.

It localises to the cytoplasm. It catalyses the reaction D-erythro-1-(imidazol-4-yl)glycerol 3-phosphate = 3-(imidazol-4-yl)-2-oxopropyl phosphate + H2O. It functions in the pathway amino-acid biosynthesis; L-histidine biosynthesis; L-histidine from 5-phospho-alpha-D-ribose 1-diphosphate: step 6/9. This Clavibacter michiganensis subsp. michiganensis (strain NCPPB 382) protein is Imidazoleglycerol-phosphate dehydratase.